The primary structure comprises 442 residues: D-serine dehydratase (442 aa).

Position 118 is an N6-(pyridoxal phosphate)lysine (K118).

The protein belongs to the serine/threonine dehydratase family. DsdA subfamily. In terms of assembly, monomer. It depends on pyridoxal 5'-phosphate as a cofactor.

The enzyme catalyses D-serine = pyruvate + NH4(+). The polypeptide is D-serine dehydratase (Escherichia coli O157:H7).